The following is a 396-amino-acid chain: NADH-ubiquinone oxidoreductase 49 kDa subunit (396 aa).

The protein belongs to the complex I 49 kDa subunit family.

The protein resides in the mitochondrion. The catalysed reaction is a ubiquinone + NADH + 5 H(+)(in) = a ubiquinol + NAD(+) + 4 H(+)(out). Core subunit of the mitochondrial membrane respiratory chain NADH dehydrogenase (Complex I) that is believed to belong to the minimal assembly required for catalysis. Complex I functions in the transfer of electrons from NADH to the respiratory chain. The immediate electron acceptor for the enzyme is believed to be ubiquinone. Component of the iron-sulfur (IP) fragment of the enzyme. Component of the iron-sulfur (IP) fragment of the enzyme. This Reclinomonas americana protein is NADH-ubiquinone oxidoreductase 49 kDa subunit (NAD7).